The primary structure comprises 204 residues: Small ribosomal subunit protein uS4 (204 aa).

A disordered region spans residues Met-1–Gly-49. One can recognise an S4 RNA-binding domain in the interval Gln-94 to Ile-154.

Belongs to the universal ribosomal protein uS4 family. Part of the 30S ribosomal subunit. Contacts protein S5. The interaction surface between S4 and S5 is involved in control of translational fidelity.

One of the primary rRNA binding proteins, it binds directly to 16S rRNA where it nucleates assembly of the body of the 30S subunit. Functionally, with S5 and S12 plays an important role in translational accuracy. This is Small ribosomal subunit protein uS4 from Erythrobacter litoralis (strain HTCC2594).